A 296-amino-acid chain; its full sequence is Glycine--tRNA ligase alpha subunit (296 aa).

This sequence belongs to the class-II aminoacyl-tRNA synthetase family. Tetramer of two alpha and two beta subunits.

It localises to the cytoplasm. It catalyses the reaction tRNA(Gly) + glycine + ATP = glycyl-tRNA(Gly) + AMP + diphosphate. The chain is Glycine--tRNA ligase alpha subunit from Maricaulis maris (strain MCS10) (Caulobacter maris).